Consider the following 341-residue polypeptide: NADH-ubiquinone oxidoreductase chain 2 (341 aa).

Transmembrane regions (helical) follow at residues 8–28, 61–81, 95–115, 145–165, 174–191, 195–215, 238–258, 272–292, and 321–341; these read IFLIMLIFGTLVTISSNSWLG, FLTQAFASSILLFAIIMLMFL, ILILSTLLLKSGAAPFHFWFP, FIYNFFMISIILSMLIGSLGG, LMAFSSINHLGWMLLAMM, MLWMTYFLMYSLLSFSIVLMF, LLIFLNLLSLGGLPPFLGFLP, LFILTISVCLTLITLYFYLRL, and LIFNFISIGGLVMISMIYIIM.

The protein belongs to the complex I subunit 2 family.

It localises to the mitochondrion inner membrane. The enzyme catalyses a ubiquinone + NADH + 5 H(+)(in) = a ubiquinol + NAD(+) + 4 H(+)(out). In terms of biological role, core subunit of the mitochondrial membrane respiratory chain NADH dehydrogenase (Complex I) that is believed to belong to the minimal assembly required for catalysis. Complex I functions in the transfer of electrons from NADH to the respiratory chain. The immediate electron acceptor for the enzyme is believed to be ubiquinone. The protein is NADH-ubiquinone oxidoreductase chain 2 (mt:ND2) of Anopheles gambiae (African malaria mosquito).